Reading from the N-terminus, the 270-residue chain is Phosphonoacetaldehyde hydrolase (270 aa).

Residue D11 is the Nucleophile of the active site. Residues D11 and A13 each coordinate Mg(2+). The active-site Schiff-base intermediate with substrate is K53. D187 provides a ligand contact to Mg(2+).

Belongs to the HAD-like hydrolase superfamily. PhnX family. As to quaternary structure, homodimer. Mg(2+) serves as cofactor.

It catalyses the reaction phosphonoacetaldehyde + H2O = acetaldehyde + phosphate + H(+). Involved in phosphonate degradation. In Salmonella gallinarum (strain 287/91 / NCTC 13346), this protein is Phosphonoacetaldehyde hydrolase.